Reading from the N-terminus, the 477-residue chain is Aspartyl/glutamyl-tRNA(Asn/Gln) amidotransferase subunit B (477 aa).

Belongs to the GatB/GatE family. GatB subfamily. In terms of assembly, heterotrimer of A, B and C subunits.

It catalyses the reaction L-glutamyl-tRNA(Gln) + L-glutamine + ATP + H2O = L-glutaminyl-tRNA(Gln) + L-glutamate + ADP + phosphate + H(+). It carries out the reaction L-aspartyl-tRNA(Asn) + L-glutamine + ATP + H2O = L-asparaginyl-tRNA(Asn) + L-glutamate + ADP + phosphate + 2 H(+). Allows the formation of correctly charged Asn-tRNA(Asn) or Gln-tRNA(Gln) through the transamidation of misacylated Asp-tRNA(Asn) or Glu-tRNA(Gln) in organisms which lack either or both of asparaginyl-tRNA or glutaminyl-tRNA synthetases. The reaction takes place in the presence of glutamine and ATP through an activated phospho-Asp-tRNA(Asn) or phospho-Glu-tRNA(Gln). The chain is Aspartyl/glutamyl-tRNA(Asn/Gln) amidotransferase subunit B from Streptococcus gordonii (strain Challis / ATCC 35105 / BCRC 15272 / CH1 / DL1 / V288).